Here is a 78-residue protein sequence, read N- to C-terminus: D-alanyl carrier protein (78 aa).

The Carrier domain occupies 1–77; the sequence is MAVKEEVVEI…KVIAKVESLI (77 aa). S35 is subject to O-(pantetheine 4'-phosphoryl)serine.

This sequence belongs to the DltC family. Post-translationally, 4'-phosphopantetheine is transferred from CoA to a specific serine of apo-DCP.

It is found in the cytoplasm. It participates in cell wall biogenesis; lipoteichoic acid biosynthesis. Its function is as follows. Carrier protein involved in the D-alanylation of lipoteichoic acid (LTA). The loading of thioester-linked D-alanine onto DltC is catalyzed by D-alanine--D-alanyl carrier protein ligase DltA. The DltC-carried D-alanyl group is further transferred to cell membrane phosphatidylglycerol (PG) by forming an ester bond, probably catalyzed by DltD. D-alanylation of LTA plays an important role in modulating the properties of the cell wall in Gram-positive bacteria, influencing the net charge of the cell wall. The sequence is that of D-alanyl carrier protein from Leuconostoc citreum (strain KM20).